The following is a 488-amino-acid chain: Glutamyl-tRNA(Gln) amidotransferase subunit A (488 aa).

Catalysis depends on charge relay system residues Lys77 and Ser152. Ser176 (acyl-ester intermediate) is an active-site residue.

The protein belongs to the amidase family. GatA subfamily. Heterotrimer of A, B and C subunits.

The enzyme catalyses L-glutamyl-tRNA(Gln) + L-glutamine + ATP + H2O = L-glutaminyl-tRNA(Gln) + L-glutamate + ADP + phosphate + H(+). Functionally, allows the formation of correctly charged Gln-tRNA(Gln) through the transamidation of misacylated Glu-tRNA(Gln) in organisms which lack glutaminyl-tRNA synthetase. The reaction takes place in the presence of glutamine and ATP through an activated gamma-phospho-Glu-tRNA(Gln). This chain is Glutamyl-tRNA(Gln) amidotransferase subunit A, found in Streptococcus pyogenes serotype M12 (strain MGAS2096).